A 262-amino-acid chain; its full sequence is Triosephosphate isomerase (262 aa).

A substrate-binding site is contributed by 13–15; the sequence is NWK. His-103 serves as the catalytic Electrophile. Residue Glu-175 is the Proton acceptor of the active site. Residues Gly-181, Ser-221, and 242–243 contribute to the substrate site; that span reads GG.

This sequence belongs to the triosephosphate isomerase family. Homodimer.

The protein localises to the cytoplasm. It carries out the reaction D-glyceraldehyde 3-phosphate = dihydroxyacetone phosphate. It functions in the pathway carbohydrate biosynthesis; gluconeogenesis. Its pathway is carbohydrate degradation; glycolysis; D-glyceraldehyde 3-phosphate from glycerone phosphate: step 1/1. Its function is as follows. Involved in the gluconeogenesis. Catalyzes stereospecifically the conversion of dihydroxyacetone phosphate (DHAP) to D-glyceraldehyde-3-phosphate (G3P). This chain is Triosephosphate isomerase, found in Corynebacterium efficiens (strain DSM 44549 / YS-314 / AJ 12310 / JCM 11189 / NBRC 100395).